The primary structure comprises 295 residues: Pyridoxal 5'-phosphate synthase subunit PdxS (295 aa).

D25 lines the D-ribose 5-phosphate pocket. The Schiff-base intermediate with D-ribose 5-phosphate role is filled by K82. G154 contributes to the D-ribose 5-phosphate binding site. Residue R166 coordinates D-glyceraldehyde 3-phosphate. Residues G215 and 236–237 (GS) each bind D-ribose 5-phosphate.

The protein belongs to the PdxS/SNZ family. As to quaternary structure, in the presence of PdxT, forms a dodecamer of heterodimers.

The enzyme catalyses aldehydo-D-ribose 5-phosphate + D-glyceraldehyde 3-phosphate + L-glutamine = pyridoxal 5'-phosphate + L-glutamate + phosphate + 3 H2O + H(+). The protein operates within cofactor biosynthesis; pyridoxal 5'-phosphate biosynthesis. In terms of biological role, catalyzes the formation of pyridoxal 5'-phosphate from ribose 5-phosphate (RBP), glyceraldehyde 3-phosphate (G3P) and ammonia. The ammonia is provided by the PdxT subunit. Can also use ribulose 5-phosphate and dihydroxyacetone phosphate as substrates, resulting from enzyme-catalyzed isomerization of RBP and G3P, respectively. The protein is Pyridoxal 5'-phosphate synthase subunit PdxS of Bacillus cereus (strain G9842).